A 334-amino-acid polypeptide reads, in one-letter code: TPR repeat-containing protein YsoA (334 aa).

3 TPR repeats span residues 17–50 (KDRLVEKGMSSLKEKKYQEALELFSEAMKYDDTE), 52–84 (DLHLGMAICFLELGELEEAESVCEKMLKEGYGH), and 195–230 (HPIIKTMIVMLLAEHEYSKPVHISKFGESLTIEPSE).

The polypeptide is TPR repeat-containing protein YsoA (ysoA) (Bacillus subtilis (strain 168)).